A 491-amino-acid chain; its full sequence is MSRAYDLVVIGAGSGGLEAGWNAASLHKKRVAVIDLQKHHGPPHYAALGGTCVNVGCVPKKLMVTGANYMDTIRESAGFGWELDRESVRPNWKALIAAKNKAVSGINDSYEGMFADTEGLTFHQGFGALQDNHTVLVRESADPNSAVLETLDTEYILLATGSWPQHLGIEGDDLCITSNEAFYLDEAPKRALCVGGGYISIEFAGIFNAYKARGGQVDLAYRGDMILRGFDSELRKQLTEQLRANGINVRTHENPAKVTKNADGTRHVVFESGAEADYDVVMLAIGRVPRSQTLQLDKAGVEVAKNGAIKVDAYSKTNVDNIYAIGDVTDRVMLTPVAINEGAAFVDTVFANKPRATDHTKVACAVFSIPPMGVCGYVEEDAAKKYDQVAVYESSFTPLMHNISGSTYKKFMVRIVTNHADGEVLGVHMLGDSSPEIIQSVAICLKMGAKISDFYNTIGVHPTSAEELCSMRTPAYFYQKGKRVEKIDSNL.

Residue 35 to 51 (DLQKHHGPPHYAALGGT) participates in FAD binding. Residues Cys-52 and Cys-57 are joined by a disulfide bond. His-461 (proton acceptor) is an active-site residue.

Belongs to the class-I pyridine nucleotide-disulfide oxidoreductase family. In terms of assembly, homodimer. The cofactor is FAD. The N-terminus is blocked.

The protein resides in the cytoplasm. The catalysed reaction is trypanothione + NADP(+) = trypanothione disulfide + NADPH + H(+). Functionally, trypanothione is the parasite analog of glutathione; this enzyme is the equivalent of glutathione reductase. This chain is Trypanothione reductase (TPR), found in Crithidia fasciculata.